The following is a 489-amino-acid chain: Cobyric acid synthase (489 aa).

The 189-residue stretch at 251–439 (RLTVVAPVYP…LHGLFDTPAA (189 aa)) folds into the GATase cobBQ-type domain. Residue Cys-332 is the Nucleophile of the active site. His-431 is a catalytic residue.

It belongs to the CobB/CobQ family. CobQ subfamily.

It functions in the pathway cofactor biosynthesis; adenosylcobalamin biosynthesis. Its function is as follows. Catalyzes amidations at positions B, D, E, and G on adenosylcobyrinic A,C-diamide. NH(2) groups are provided by glutamine, and one molecule of ATP is hydrogenolyzed for each amidation. This chain is Cobyric acid synthase, found in Aromatoleum aromaticum (strain DSM 19018 / LMG 30748 / EbN1) (Azoarcus sp. (strain EbN1)).